The following is a 195-amino-acid chain: NADH-quinone oxidoreductase subunit C (195 aa).

It belongs to the complex I 30 kDa subunit family. In terms of assembly, NDH-1 is composed of 14 different subunits. Subunits NuoB, C, D, E, F, and G constitute the peripheral sector of the complex.

It is found in the cell inner membrane. It catalyses the reaction a quinone + NADH + 5 H(+)(in) = a quinol + NAD(+) + 4 H(+)(out). In terms of biological role, NDH-1 shuttles electrons from NADH, via FMN and iron-sulfur (Fe-S) centers, to quinones in the respiratory chain. The immediate electron acceptor for the enzyme in this species is believed to be ubiquinone. Couples the redox reaction to proton translocation (for every two electrons transferred, four hydrogen ions are translocated across the cytoplasmic membrane), and thus conserves the redox energy in a proton gradient. The chain is NADH-quinone oxidoreductase subunit C from Laribacter hongkongensis (strain HLHK9).